Reading from the N-terminus, the 359-residue chain is Cytohesin-interacting protein (359 aa).

Positions 77–166 (LVTVEKQDNE…LLTIETLNGT (90 aa)) constitute a PDZ domain. Residues 166–188 (TMILKRTELEAKLQVLKQTLKQK) form an interaction with CYTH1 region. Positions 166 to 188 (TMILKRTELEAKLQVLKQTLKQK) form a coiled coil.

Interacts with CYTH1 and SNX27. In terms of tissue distribution, expressed in lymph nodes, thymus, spleen, lung, peripheral blood leukocytes and bone marrow.

It is found in the cytoplasm. The protein resides in the early endosome. Functionally, by its binding to cytohesin-1 (CYTH1), it modifies activation of ARFs by CYTH1 and its precise function may be to sequester CYTH1 in the cytoplasm. The chain is Cytohesin-interacting protein (CYTIP) from Homo sapiens (Human).